An 89-amino-acid chain; its full sequence is Small ribosomal subunit protein uS15 (89 aa).

Over residues 1 to 11 (MSIAAERKAEV) the composition is skewed to basic and acidic residues. Positions 1 to 25 (MSIAAERKAEVIKTSANKPGDTGSP) are disordered.

Belongs to the universal ribosomal protein uS15 family. In terms of assembly, part of the 30S ribosomal subunit. Forms a bridge to the 50S subunit in the 70S ribosome, contacting the 23S rRNA.

In terms of biological role, one of the primary rRNA binding proteins, it binds directly to 16S rRNA where it helps nucleate assembly of the platform of the 30S subunit by binding and bridging several RNA helices of the 16S rRNA. Forms an intersubunit bridge (bridge B4) with the 23S rRNA of the 50S subunit in the ribosome. The protein is Small ribosomal subunit protein uS15 of Nitrobacter winogradskyi (strain ATCC 25391 / DSM 10237 / CIP 104748 / NCIMB 11846 / Nb-255).